Reading from the N-terminus, the 240-residue chain is Ribonuclease PH (240 aa).

Phosphate contacts are provided by residues Arg87 and 125 to 127; that span reads GTR.

This sequence belongs to the RNase PH family. In terms of assembly, homohexameric ring arranged as a trimer of dimers.

It carries out the reaction tRNA(n+1) + phosphate = tRNA(n) + a ribonucleoside 5'-diphosphate. In terms of biological role, phosphorolytic 3'-5' exoribonuclease that plays an important role in tRNA 3'-end maturation. Removes nucleotide residues following the 3'-CCA terminus of tRNAs; can also add nucleotides to the ends of RNA molecules by using nucleoside diphosphates as substrates, but this may not be physiologically important. Probably plays a role in initiation of 16S rRNA degradation (leading to ribosome degradation) during starvation. This is Ribonuclease PH from Pseudomonas putida (strain GB-1).